Here is a 480-residue protein sequence, read N- to C-terminus: RuvB-like helicase 2 (480 aa).

73 to 80 (GEPSTGKT) contacts ATP.

Belongs to the RuvB family. As to quaternary structure, forms homohexameric rings. May form a dodecamer with rept made of two stacked hexameric rings. Component of the chromatin remodeling Ino80 complex.

It localises to the nucleus. The enzyme catalyses ATP + H2O = ADP + phosphate + H(+). Its function is as follows. Acts as a transcriptional coactivator in Wg signaling caused by altered arm signaling. Pont and rept interfere antagonistically with nuclear arm signaling function, and are required to enhance or reduce arm activity, respectively. Also an essential cofactor for the normal function of Myc; required for cellular proliferation and growth. In terms of biological role, proposed core component of the chromatin remodeling Ino80 complex which is involved in transcriptional regulation, DNA replication and probably DNA repair. This chain is RuvB-like helicase 2, found in Drosophila pseudoobscura pseudoobscura (Fruit fly).